We begin with the raw amino-acid sequence, 79 residues long: DNA-directed RNA polymerase subunit omega (79 aa).

The protein belongs to the RNA polymerase subunit omega family. In cyanobacteria the RNAP catalytic core is composed of 2 alpha, 1 beta, 1 beta', 1 gamma and 1 omega subunit. When a sigma factor is associated with the core the holoenzyme is formed, which can initiate transcription.

The catalysed reaction is RNA(n) + a ribonucleoside 5'-triphosphate = RNA(n+1) + diphosphate. In terms of biological role, promotes RNA polymerase assembly. Latches the N- and C-terminal regions of the beta' subunit thereby facilitating its interaction with the beta and alpha subunits. This chain is DNA-directed RNA polymerase subunit omega, found in Synechococcus sp. (strain JA-2-3B'a(2-13)) (Cyanobacteria bacterium Yellowstone B-Prime).